A 442-amino-acid polypeptide reads, in one-letter code: MDAWPRCLERLEAEFPPEDVHTWLKPLQAEDRGDSIVLYAPNAFIVEQVRERYLPRIRELLAYFAGNGEVALAVGSRPRAPEPLPAPQAVASAPAAAPIVPFAGNLDSHYTFANFVEGRSNQLGLAAAIQAAQKPGDRAHNPLLLYGSTGLGKTHLMFAAGNALRQANPAAKVMYLRSEQFFSAMIRALHDKAMDQFKRQFHQIDALLIDDIQFFAGMDRTQEEFFHTFNALFDGRQHIILTCDRYPREVEGLEPRLKSRLAWGLSVAIDPPDFETRAAIVLAKARERGAEIPDDVAFLIAKKMRSNVRDLEGALNTLVARANFTGRSITVEFAQETLRDLLRAQQQAIGIPNIQKTVADYYGLQMKDLLSKRRTRSLARPRQVAMALAKELTEHSLPEIGDAFAGRDHTTVLHACRQIRTLMEADGKLREDWEKLIRKLSE.

Residues 1-75 (MDAWPRCLER…GNGEVALAVG (75 aa)) form a domain I, interacts with DnaA modulators region. The segment at 75–104 (GSRPRAPEPLPAPQAVASAPAAAPIVPFAG) is domain II. A domain III, AAA+ region region spans residues 105–322 (NLDSHYTFAN…GALNTLVARA (218 aa)). Residues Gly150, Gly152, Lys153, and Thr154 each contribute to the ATP site. A domain IV, binds dsDNA region spans residues 323 to 442 (NFTGRSITVE…WEKLIRKLSE (120 aa)).

The protein belongs to the DnaA family. In terms of assembly, oligomerizes as a right-handed, spiral filament on DNA at oriC.

The protein resides in the cytoplasm. Its function is as follows. Plays an essential role in the initiation and regulation of chromosomal replication. ATP-DnaA binds to the origin of replication (oriC) to initiate formation of the DNA replication initiation complex once per cell cycle. Binds the DnaA box (a 9 base pair repeat at the origin) and separates the double-stranded (ds)DNA. Forms a right-handed helical filament on oriC DNA; dsDNA binds to the exterior of the filament while single-stranded (ss)DNA is stabiized in the filament's interior. The ATP-DnaA-oriC complex binds and stabilizes one strand of the AT-rich DNA unwinding element (DUE), permitting loading of DNA polymerase. After initiation quickly degrades to an ADP-DnaA complex that is not apt for DNA replication. Binds acidic phospholipids. The sequence is that of Chromosomal replication initiator protein DnaA from Xanthomonas campestris pv. campestris (strain 8004).